We begin with the raw amino-acid sequence, 571 residues long: Glutamate--tRNA ligase (571 aa).

Residues Gly75–Leu88 are compositionally biased toward basic and acidic residues. The segment at Gly75–Asn98 is disordered. A 'HIGH' region motif is present at residues Pro105 to His115.

The protein belongs to the class-I aminoacyl-tRNA synthetase family. Glutamate--tRNA ligase type 2 subfamily.

It localises to the cytoplasm. The catalysed reaction is tRNA(Glu) + L-glutamate + ATP = L-glutamyl-tRNA(Glu) + AMP + diphosphate. Catalyzes the attachment of glutamate to tRNA(Glu) in a two-step reaction: glutamate is first activated by ATP to form Glu-AMP and then transferred to the acceptor end of tRNA(Glu). In Methanopyrus kandleri (strain AV19 / DSM 6324 / JCM 9639 / NBRC 100938), this protein is Glutamate--tRNA ligase.